A 260-amino-acid chain; its full sequence is Proteasome subunit alpha (260 aa).

The segment at 231–260 is disordered; the sequence is LLPEDFSPGQTEGGGDPAPESGDSKDAKDN.

Belongs to the peptidase T1A family. The 20S proteasome core is composed of 14 alpha and 14 beta subunits that assemble into four stacked heptameric rings, resulting in a barrel-shaped structure. The two inner rings, each composed of seven catalytic beta subunits, are sandwiched by two outer rings, each composed of seven alpha subunits. The catalytic chamber with the active sites is on the inside of the barrel. Has a gated structure, the ends of the cylinder being occluded by the N-termini of the alpha-subunits. Is capped by the proteasome-associated ATPase, ARC.

It localises to the cytoplasm. Its pathway is protein degradation; proteasomal Pup-dependent pathway. Its activity is regulated as follows. The formation of the proteasomal ATPase ARC-20S proteasome complex, likely via the docking of the C-termini of ARC into the intersubunit pockets in the alpha-rings, may trigger opening of the gate for substrate entry. Interconversion between the open-gate and close-gate conformations leads to a dynamic regulation of the 20S proteasome proteolysis activity. Functionally, component of the proteasome core, a large protease complex with broad specificity involved in protein degradation. In Mycobacteroides abscessus (strain ATCC 19977 / DSM 44196 / CCUG 20993 / CIP 104536 / JCM 13569 / NCTC 13031 / TMC 1543 / L948) (Mycobacterium abscessus), this protein is Proteasome subunit alpha.